The primary structure comprises 51 residues: Large ribosomal subunit protein bL33 (51 aa).

It belongs to the bacterial ribosomal protein bL33 family.

This is Large ribosomal subunit protein bL33 from Pseudomonas putida (strain ATCC 47054 / DSM 6125 / CFBP 8728 / NCIMB 11950 / KT2440).